Reading from the N-terminus, the 258-residue chain is Thiazole synthase (258 aa).

Catalysis depends on K98, which acts as the Schiff-base intermediate with DXP. 1-deoxy-D-xylulose 5-phosphate is bound by residues G159, 185 to 186, and 207 to 208; these read AG and NT.

It belongs to the ThiG family. Homotetramer. Forms heterodimers with either ThiH or ThiS.

Its subcellular location is the cytoplasm. It carries out the reaction [ThiS sulfur-carrier protein]-C-terminal-Gly-aminoethanethioate + 2-iminoacetate + 1-deoxy-D-xylulose 5-phosphate = [ThiS sulfur-carrier protein]-C-terminal Gly-Gly + 2-[(2R,5Z)-2-carboxy-4-methylthiazol-5(2H)-ylidene]ethyl phosphate + 2 H2O + H(+). It participates in cofactor biosynthesis; thiamine diphosphate biosynthesis. Functionally, catalyzes the rearrangement of 1-deoxy-D-xylulose 5-phosphate (DXP) to produce the thiazole phosphate moiety of thiamine. Sulfur is provided by the thiocarboxylate moiety of the carrier protein ThiS. In vitro, sulfur can be provided by H(2)S. This Cytophaga hutchinsonii (strain ATCC 33406 / DSM 1761 / CIP 103989 / NBRC 15051 / NCIMB 9469 / D465) protein is Thiazole synthase.